Here is a 351-residue protein sequence, read N- to C-terminus: Adenine deaminase (351 aa).

3 residues coordinate Zn(2+): His-19, His-21, and His-208. Glu-211 functions as the Proton donor in the catalytic mechanism. Asp-288 serves as a coordination point for Zn(2+). Position 289 (Asp-289) interacts with substrate.

It belongs to the metallo-dependent hydrolases superfamily. Adenosine and AMP deaminases family. Adenine deaminase type 2 subfamily. Requires Zn(2+) as cofactor.

It is found in the cytoplasm. The protein resides in the nucleus. The catalysed reaction is adenine + H2O + H(+) = hypoxanthine + NH4(+). In terms of biological role, catalyzes the hydrolytic deamination of adenine to hypoxanthine. Plays an important role in the purine salvage pathway and in nitrogen catabolism. In Aspergillus oryzae (strain ATCC 42149 / RIB 40) (Yellow koji mold), this protein is Adenine deaminase (aah1).